Consider the following 189-residue polypeptide: Ribonuclease M5 2 (189 aa).

Positions 8 to 91 constitute a Toprim domain; sequence SQVIVAEGRD…VFLKRDEAVP (84 aa). The Mg(2+) site is built by Glu-14, Asp-60, and Asp-62.

Belongs to the ribonuclease M5 family. Mg(2+) serves as cofactor.

Its subcellular location is the cytoplasm. The catalysed reaction is Endonucleolytic cleavage of RNA, removing 21 and 42 nucleotides, respectively, from the 5'- and 3'-termini of a 5S-rRNA precursor.. Required for correct processing of both the 5' and 3' ends of 5S rRNA precursor. Cleaves both sides of a double-stranded region yielding mature 5S rRNA in one step. The sequence is that of Ribonuclease M5 2 from Ligilactobacillus salivarius (strain UCC118) (Lactobacillus salivarius).